We begin with the raw amino-acid sequence, 265 residues long: Upstream stimulatory factor (265 aa).

A compositionally biased stretch (basic and acidic residues) spans 1-18 (MDVQDHTLDQGPQDKDKD). Disordered stretches follow at residues 1 to 21 (MDVQDHTLDQGPQDKDKDLEE) and 119 to 149 (ASAAIPGDGAGPASGGEQQPGITQPSGAAGG). The segment covering 134 to 144 (GEQQPGITQPS) has biased composition (polar residues). Residues 190–245 (RRRATHNEVERRRRDKINNWIVKLSKIIPDCNIDHSKQGQSKGGILTKTCDYIHDL) form the bHLH domain.

As to quaternary structure, efficient DNA binding requires dimerization with another bHLH protein. Binds DNA as a homodimer or a heterodimer. In terms of tissue distribution, enriched in ectodermal tissue.

It is found in the nucleus. Its function is as follows. May act as a transcription factor which recognizes the CACGTG motif on SPEC gene promoters. This Strongylocentrotus purpuratus (Purple sea urchin) protein is Upstream stimulatory factor.